The chain runs to 591 residues: Formate--tetrahydrofolate ligase (591 aa).

Position 74 to 81 (74 to 81 (TPLGEGKS)) interacts with ATP.

It belongs to the formate--tetrahydrofolate ligase family.

It carries out the reaction (6S)-5,6,7,8-tetrahydrofolate + formate + ATP = (6R)-10-formyltetrahydrofolate + ADP + phosphate. It functions in the pathway one-carbon metabolism; tetrahydrofolate interconversion. This Desulfovibrio desulfuricans (strain ATCC 27774 / DSM 6949 / MB) protein is Formate--tetrahydrofolate ligase.